A 477-amino-acid polypeptide reads, in one-letter code: Transcription factor Sox-9-A (477 aa).

2 disordered regions span residues 1–66 and 157–274; these read MNLL…ETED and EAER…FRDV. Over residues 27–42 the composition is skewed to low complexity; sequence SDDSAGSPCPSGSGSD. Composition is skewed to basic and acidic residues over residues 56-66 and 157-174; these read GDQELKKETED and EAERLRVQHKKDHPDYKY. Lys-61 participates in a covalent cross-link: Glycyl lysine isopeptide (Lys-Gly) (interchain with G-Cter in SUMO). The segment at 63-103 is dimerization (DIM); that stretch reads ETEDEKFPVCIREAVSQVLKGYDWTLVPMPVRVNGSSKNKP. The tract at residues 63-103 is PQA; it reads ETEDEKFPVCIREAVSQVLKGYDWTLVPMPVRVNGSSKNKP. The HMG box DNA-binding region spans 105-173; it reads VKRPMNAFMV…QHKKDHPDYK (69 aa). Over residues 211–222 the composition is skewed to low complexity; it reads SPHSSSSMSEVH. Residues 224–308 are transactivation domain (TAM); the sequence is PGEHSGQSQG…LPPNGHPGVG (85 aa). 2 short sequence motifs (9aaTAD) span residues 276 to 285 and 291 to 299; these read IGELSSEVIS and DVNEFDQYL. The disordered stretch occupies residues 301–384; it reads PNGHPGVGST…SDQQQQHSPQ (84 aa). Composition is skewed to polar residues over residues 308–328 and 346–361; these read GSTQASYTGSYGISSTPSATT and HSLSTLNSEQSQSQQR. Positions 361–477 are transactivation domain (TAC); that stretch reads RTHIKTEQLS…QPVYTQLTRP (117 aa). Lys-365 is covalently cross-linked (Glycyl lysine isopeptide (Lys-Gly) (interchain with G-Cter in SUMO)). Low complexity predominate over residues 370 to 384; it reads SPSHYSDQQQQHSPQ. Positions 428–436 match the 9aaTAD 3 motif; the sequence is SGLYSTFSY. The segment at 446-477 is disordered; it reads TPIADTTGVPSIPQTHSPQHWEQPVYTQLTRP. Residues 453–477 show a composition bias toward polar residues; the sequence is GVPSIPQTHSPQHWEQPVYTQLTRP.

As to quaternary structure, interacts with the sumoylation factors ube2i/ubc9 and sumo1. In terms of processing, sumoylated. Lys-365 is the major site of sumoylation, although sumoylation at Lys-61 also occurs. Sumoylation plays a key role in regulating formation of the neural crest and otic placode. From mid-gastrula (stage 10.5-11), expressed in a ring around the blastopore, with expression decreasing toward the dorsal side. At stage 12, expression around the blastopore decreases and begins to increase lateral to the neural plate in the presumptive neural crest, where expression dramatically increases around stage 14. Also expressed in the otic placode as early as stage 13/14. By the tailbud stage expression is restricted to the otic cup and then throughout the otic vesicle, with more intense staining at the dorsal-most region, the prospective region of the semicircular canals and endolymphatic duct. At the early tailbud stage (stage 23), expressed in migrating cranial neural crest cells and in the trunk neural crest. Also expressed in the genital ridges, developing eye, nasal placode and prospective pineal gland. Around stage 25, expression is down-regulated in the trunk neural crest but persists in the migrating cranial crest cells as they populate the pharyngeal arches, otic placode, developing eye, genital ridges and notochord. By stage 31, expression remains strong in the pharyngeal arches. Also expressed in the pancreas; first expressed at stage 25 in the pancreatic anlagen, dorsally in diverticulum. As development proceeds, expression continues in pancreatic tissue, being restricted to ventral and dorsal pancreatic buds.

The protein localises to the nucleus. It is found in the cytoplasm. Its function is as follows. Transcription factor that plays a key role in chondrocytes differentiation and skeletal development. Specifically binds the 5'-ACAAAG-3' DNA motif present in enhancers and super-enhancers and promotes expression of genes important for chondrogenesis, including COL2A1. Plays a central role in successive steps of chondrocyte differentiation. Absolutely required for precartilaginous condensation, the first step in chondrogenesis during which skeletal progenitors differentiate into prechondrocytes. Together with SOX5 and SOX6, required for overt chondrogenesis when condensed prechondrocytes differentiate into early stage chondrocytes, the second step in chondrogenesis. Later, required to direct hypertrophic maturation and block osteoblast differentiation of growth plate chondrocytes: maintains chondrocyte columnar proliferation, delays prehypertrophy and then prevents osteoblastic differentiation of chondrocytes. Also required for chondrocyte hypertrophy, both indirectly, by keeping the lineage fate of chondrocytes, and directly, by remaining present in upper hypertrophic cells. Low lipid levels are the main nutritional determinant for chondrogenic commitment of skeletal progenitor cells: when lipids levels are low, FOXO transcription factors promote expression of SOX9, which induces chondrogenic commitment and suppresses fatty acid oxidation. In addition to cartilage development, also acts as a regulator of proliferation and differentiation in epithelial stem/progenitor cells. Involved in development of the cranial neural crest, which is fated to form skeletal elements. Also required for otic placode specification during inner ear development. The sequence is that of Transcription factor Sox-9-A (sox9-a) from Xenopus laevis (African clawed frog).